The sequence spans 439 residues: Lactamase-like protein nscB (439 aa).

Zn(2+) is bound by residues His-214, His-216, Asp-218, and His-219. The Proton donor/acceptor role is filled by Asp-218.

The protein belongs to the metallo-beta-lactamase superfamily. It depends on Zn(2+) as a cofactor.

It functions in the pathway secondary metabolite biosynthesis. Functionally, lactamase-like protein; part of the gene cluster that mediates the biosynthesis of neosartoricin B, a prenylated anthracenone that probably exhibits T-cell antiproliferative activity, suggestive of a physiological role as an immunosuppressive agent. The non-reducing polyketide synthase nscA probably synthesizes and cyclizes the decaketide backbone. The hydrolase nscB then mediates the product release through hydrolysis followed by spontaneous decarboxylation. The prenyltransferase nscD catalyzes the addition of the dimethylallyl group to the aromatic C5. The FAD-dependent monooxygenase nscC is then responsible for the stereospecific hydroxylation at C2. Neosartoricin B can be converted into two additional compounds neosartoricins C and D. Neosartoricin C is a spirocyclic compound that is cyclized through the attack of C3 hydroxyl on C14, followed by dehydration. On the other hand, neosartoricin D is a further cyclized compound in which attack of C2 on C14 in neosartoricin C results in the formation of the acetal-containing dioxabicyclo-octanone ring. Both of these compounds are novel and possibly represent related metabolites of the gene cluster. This is Lactamase-like protein nscB from Arthroderma benhamiae (strain ATCC MYA-4681 / CBS 112371) (Trichophyton mentagrophytes).